The chain runs to 938 residues: Isoleucine--tRNA ligase (938 aa).

A 'HIGH' region motif is present at residues 58–68; that stretch reads PYANGSIHIGH. Residue E561 participates in L-isoleucyl-5'-AMP binding. Positions 602–606 match the 'KMSKS' region motif; that stretch reads KMSKS. ATP is bound at residue K605. C901, C904, C921, and C924 together coordinate Zn(2+).

Belongs to the class-I aminoacyl-tRNA synthetase family. IleS type 1 subfamily. Monomer. The cofactor is Zn(2+).

It localises to the cytoplasm. The enzyme catalyses tRNA(Ile) + L-isoleucine + ATP = L-isoleucyl-tRNA(Ile) + AMP + diphosphate. Catalyzes the attachment of isoleucine to tRNA(Ile). As IleRS can inadvertently accommodate and process structurally similar amino acids such as valine, to avoid such errors it has two additional distinct tRNA(Ile)-dependent editing activities. One activity is designated as 'pretransfer' editing and involves the hydrolysis of activated Val-AMP. The other activity is designated 'posttransfer' editing and involves deacylation of mischarged Val-tRNA(Ile). This chain is Isoleucine--tRNA ligase, found in Citrobacter koseri (strain ATCC BAA-895 / CDC 4225-83 / SGSC4696).